Consider the following 365-residue polypeptide: MSTLHKHNTPQMAAITLLGLLLVASSIEIAGAESIGVCYGMLGNNLPNHWEVIQLYKSRNIGRLRLYDPNHGALQALKGSNIEVMLGLPNSDVKHIASGMEHARWWVQKNVKDFWPDVKIKYIAVGNEISPVTGTSYLTSFLTPAMVNIYKAIGEAGLGNNIKVSTSVDMTLIGNSYPPSQGSFRNDARWFVDPIVGFLRDTRAPLLVNIYPYFSYSGNPGQISLPYSLFTAPNVVVQDGSRQYRNLFDAMLDSVYAALERSGGASVGIVVSESGWPSAGAFGATYDNAATYLKNLIQHAKEGSPRKPRPIETYIFAMFDENNKNPELEKHFGLFSPNKQPKYNLNFGVSGSVETNATASLISEI.

An N-terminal signal peptide occupies residues 1-32; sequence MSTLHKHNTPQMAAITLLGLLLVASSIEIAGA. The active-site Proton donor is E128. E273 functions as the Nucleophile in the catalytic mechanism. Positions 349–365 are cleaved as a propeptide — removed in mature form; sequence VSGSVETNATASLISEI. N356 is a glycosylation site (N-linked (GlcNAc...) asparagine).

This sequence belongs to the glycosyl hydrolase 17 family.

The protein localises to the vacuole. The enzyme catalyses Hydrolysis of (1-&gt;3)-beta-D-glucosidic linkages in (1-&gt;3)-beta-D-glucans.. In terms of biological role, implicated in the defense of plants against pathogens. This chain is Glucan endo-1,3-beta-glucosidase, basic vacuolar isoform (GN2), found in Nicotiana plumbaginifolia (Leadwort-leaved tobacco).